Reading from the N-terminus, the 694-residue chain is Elongation factor G (694 aa).

Positions 8-287 constitute a tr-type G domain; the sequence is EDYRNFGIMA…AVVSYLPSPI (280 aa). GTP is bound by residues 17-24, 86-90, and 140-143; these read AHIDAGKT, DTPGH, and NKMD.

The protein belongs to the TRAFAC class translation factor GTPase superfamily. Classic translation factor GTPase family. EF-G/EF-2 subfamily.

It localises to the cytoplasm. Catalyzes the GTP-dependent ribosomal translocation step during translation elongation. During this step, the ribosome changes from the pre-translocational (PRE) to the post-translocational (POST) state as the newly formed A-site-bound peptidyl-tRNA and P-site-bound deacylated tRNA move to the P and E sites, respectively. Catalyzes the coordinated movement of the two tRNA molecules, the mRNA and conformational changes in the ribosome. The sequence is that of Elongation factor G from Bartonella tribocorum (strain CIP 105476 / IBS 506).